A 181-amino-acid chain; its full sequence is Large ribosomal subunit protein uL5 (181 aa).

It belongs to the universal ribosomal protein uL5 family. As to quaternary structure, part of the 50S ribosomal subunit; part of the 5S rRNA/L5/L18/L25 subcomplex. Contacts the 5S rRNA and the P site tRNA. Forms a bridge to the 30S subunit in the 70S ribosome.

This is one of the proteins that bind and probably mediate the attachment of the 5S RNA into the large ribosomal subunit, where it forms part of the central protuberance. In the 70S ribosome it contacts protein S13 of the 30S subunit (bridge B1b), connecting the 2 subunits; this bridge is implicated in subunit movement. Contacts the P site tRNA; the 5S rRNA and some of its associated proteins might help stabilize positioning of ribosome-bound tRNAs. The chain is Large ribosomal subunit protein uL5 from Mesomycoplasma hyopneumoniae (strain 7448) (Mycoplasma hyopneumoniae).